The following is a 313-amino-acid chain: Protoheme IX farnesyltransferase (313 aa).

A run of 9 helical transmembrane segments spans residues 35–55, 56–76, 98–118, 120–140, 153–173, 180–200, 226–246, 248–268, and 285–305; these read LVIF…HPVL, AFTS…LNMW, VSKP…VVTL, ILVN…YVVI, IVIG…AAAG, MLLF…LALF, ILLY…LGYF, AIYG…TLRV, and FKFS…EVIV.

Belongs to the UbiA prenyltransferase family. Protoheme IX farnesyltransferase subfamily.

Its subcellular location is the cell inner membrane. It carries out the reaction heme b + (2E,6E)-farnesyl diphosphate + H2O = Fe(II)-heme o + diphosphate. The protein operates within porphyrin-containing compound metabolism; heme O biosynthesis; heme O from protoheme: step 1/1. Its function is as follows. Converts heme B (protoheme IX) to heme O by substitution of the vinyl group on carbon 2 of heme B porphyrin ring with a hydroxyethyl farnesyl side group. The sequence is that of Protoheme IX farnesyltransferase from Rhodopseudomonas palustris (strain BisB18).